Here is a 261-residue protein sequence, read N- to C-terminus: 22 kDa alpha-zein 8b (261 aa).

Residues 1-16 form the signal peptide; that stretch reads LALLALLALFVSATNA.

The protein belongs to the zein family.

Zeins are major seed storage proteins. This Zea mays (Maize) protein is 22 kDa alpha-zein 8b.